The sequence spans 326 residues: Transposase for insertion sequence element IS4351 (326 aa).

One can recognise an Integrase catalytic domain in the interval 156–317 (IDERPEIVEL…TPNEKFKQII (162 aa)).

This sequence belongs to the transposase IS30 family.

Its function is as follows. Required for the transposition of the insertion element. This Bacteroides fragilis protein is Transposase for insertion sequence element IS4351.